Consider the following 310-residue polypeptide: Ribosomal RNA small subunit methyltransferase H (310 aa).

Residues 32 to 34 (GGH), D52, F79, D100, and Q107 contribute to the S-adenosyl-L-methionine site.

Belongs to the methyltransferase superfamily. RsmH family.

The protein localises to the cytoplasm. The catalysed reaction is cytidine(1402) in 16S rRNA + S-adenosyl-L-methionine = N(4)-methylcytidine(1402) in 16S rRNA + S-adenosyl-L-homocysteine + H(+). In terms of biological role, specifically methylates the N4 position of cytidine in position 1402 (C1402) of 16S rRNA. This is Ribosomal RNA small subunit methyltransferase H from Geobacillus kaustophilus (strain HTA426).